An 860-amino-acid chain; its full sequence is Leucine--tRNA ligase (860 aa).

The 'HIGH' region signature appears at 42–52 (PYPSGRLHMGH). The 'KMSKS' region motif lies at 619 to 623 (KMSKS). Lys622 serves as a coordination point for ATP.

The protein belongs to the class-I aminoacyl-tRNA synthetase family.

The protein resides in the cytoplasm. The enzyme catalyses tRNA(Leu) + L-leucine + ATP = L-leucyl-tRNA(Leu) + AMP + diphosphate. This is Leucine--tRNA ligase from Pectobacterium carotovorum subsp. carotovorum (strain PC1).